Reading from the N-terminus, the 440-residue chain is Chromosome partition protein MukF (440 aa).

Positions 208 to 236 (LSETSGTLRELQDTLDAAGDKLQANLLRI) are leucine-zipper.

The protein belongs to the MukF family. As to quaternary structure, interacts, and probably forms a ternary complex, with MukE and MukB via its C-terminal region. The complex formation is stimulated by calcium or magnesium. It is required for an interaction between MukE and MukB.

It localises to the cytoplasm. It is found in the nucleoid. Involved in chromosome condensation, segregation and cell cycle progression. May participate in facilitating chromosome segregation by condensation DNA from both sides of a centrally located replisome during cell division. Not required for mini-F plasmid partitioning. Probably acts via its interaction with MukB and MukE. Overexpression results in anucleate cells. It has a calcium binding activity. The polypeptide is Chromosome partition protein MukF (Klebsiella pneumoniae subsp. pneumoniae (strain ATCC 700721 / MGH 78578)).